Here is a 199-residue protein sequence, read N- to C-terminus: Small ribosomal subunit protein eS6 (199 aa).

Positions lysine 172–alanine 183 are enriched in basic and acidic residues. Positions lysine 172 to alanine 199 are disordered.

The protein belongs to the eukaryotic ribosomal protein eS6 family. Ribosomal protein S6 is the major substrate of protein kinases in eukaryote ribosomes.

Functionally, component of the 40S small ribosomal subunit. Plays an important role in controlling cell growth and proliferation through the selective translation of particular classes of mRNA. The protein is Small ribosomal subunit protein eS6 (RPS6) of Nicotiana tabacum (Common tobacco).